We begin with the raw amino-acid sequence, 163 residues long: Early nodulin-like protein 20 (163 aa).

The signal sequence occupies residues 1–25; sequence MMGKYLWALVYVTVMILIIVVEVES. One can recognise a Phytocyanin domain in the interval 26 to 126; it reads SLHRVGGGRY…GMKLAITVLP (101 aa). N-linked (GlcNAc...) asparagine glycosylation is found at Asn42, Asn63, Asn73, Asn88, and Asn135. A disulfide bridge connects residues Cys80 and Cys114. The GPI-anchor amidated serine moiety is linked to residue Ser138. The propeptide at 139–163 is removed in mature form; sequence TTTPLIPPNAITAAILIFAFKALLL.

It belongs to the early nodulin-like (ENODL) family.

The protein resides in the cell membrane. Its function is as follows. May act as a carbohydrate transporter. The sequence is that of Early nodulin-like protein 20 from Arabidopsis thaliana (Mouse-ear cress).